Reading from the N-terminus, the 265-residue chain is 4-hydroxy-tetrahydrodipicolinate reductase (265 aa).

NAD(+) is bound by residues 7-12 and Asp33; that span reads GASGRM. NADP(+) is bound at residue Arg34. NAD(+) is bound by residues 96–98 and 120–123; these read GTT and SANM. The active-site Proton donor/acceptor is His153. His154 provides a ligand contact to (S)-2,3,4,5-tetrahydrodipicolinate. Residue Lys157 is the Proton donor of the active site. 163–164 contributes to the (S)-2,3,4,5-tetrahydrodipicolinate binding site; sequence GT.

Belongs to the DapB family.

The protein localises to the cytoplasm. It catalyses the reaction (S)-2,3,4,5-tetrahydrodipicolinate + NAD(+) + H2O = (2S,4S)-4-hydroxy-2,3,4,5-tetrahydrodipicolinate + NADH + H(+). The catalysed reaction is (S)-2,3,4,5-tetrahydrodipicolinate + NADP(+) + H2O = (2S,4S)-4-hydroxy-2,3,4,5-tetrahydrodipicolinate + NADPH + H(+). The protein operates within amino-acid biosynthesis; L-lysine biosynthesis via DAP pathway; (S)-tetrahydrodipicolinate from L-aspartate: step 4/4. Catalyzes the conversion of 4-hydroxy-tetrahydrodipicolinate (HTPA) to tetrahydrodipicolinate. The chain is 4-hydroxy-tetrahydrodipicolinate reductase from Burkholderia pseudomallei (strain 1106a).